Consider the following 104-residue polypeptide: Small ribosomal subunit protein uS10 (104 aa).

The protein belongs to the universal ribosomal protein uS10 family. In terms of assembly, part of the 30S ribosomal subunit.

Involved in the binding of tRNA to the ribosomes. The chain is Small ribosomal subunit protein uS10 from Maricaulis maris (strain MCS10) (Caulobacter maris).